Reading from the N-terminus, the 554-residue chain is Glutamine--tRNA ligase (554 aa).

The 'HIGH' region signature appears at 34-44; that stretch reads PEPNGYLHIGH. ATP contacts are provided by residues 35–37 and 41–47; these read EPN and HIGHAKS. The L-glutamine site is built by Asp-67 and Tyr-212. ATP-binding positions include Thr-231, 261–262, and 269–271; these read RL and MSK. A 'KMSKS' region motif is present at residues 268-272; the sequence is VMSKR. The interval 317–324 is interaction with tRNA; that stretch reads TKQDNTIE.

It belongs to the class-I aminoacyl-tRNA synthetase family. In terms of assembly, monomer.

Its subcellular location is the cytoplasm. The enzyme catalyses tRNA(Gln) + L-glutamine + ATP = L-glutaminyl-tRNA(Gln) + AMP + diphosphate. In Escherichia coli O17:K52:H18 (strain UMN026 / ExPEC), this protein is Glutamine--tRNA ligase.